The primary structure comprises 87 residues: Cell division topological specificity factor (87 aa).

This sequence belongs to the MinE family.

Its function is as follows. Prevents the cell division inhibition by proteins MinC and MinD at internal division sites while permitting inhibition at polar sites. This ensures cell division at the proper site by restricting the formation of a division septum at the midpoint of the long axis of the cell. The chain is Cell division topological specificity factor from Leptothrix cholodnii (strain ATCC 51168 / LMG 8142 / SP-6) (Leptothrix discophora (strain SP-6)).